We begin with the raw amino-acid sequence, 293 residues long: SAGA-associated factor 29 (293 aa).

Residues 12-88 adopt a coiled-coil conformation; the sequence is ELLAELQRLL…KALDKIAEIK (77 aa). One can recognise an SGF29 C-terminal domain in the interval 152 to 293; that stretch reads GDYVAKPGDK…VVACKETKKK (142 aa). 2 histone H3K4me3 N-terminus binding regions span residues 194–196 and 240–243; these read DID and QTTC. The tract at residues 264 to 266 is histone H3K4me3 binding; the sequence is FED.

Belongs to the SGF29 family. Interacts with dimethylated and trimethylated 'Lys-4' of histone H3 (H3K4me2 and H3K4me3), with a preference for the trimethylated form (H3K4me3). Component of some SAGA-type complexes. Component of the ADA2A-containing complex (ATAC).

The protein localises to the nucleus. Chromatin reader component of some histone acetyltransferase (HAT) SAGA-type complexes like the TFTC-HAT, ATAC or STAGA complexes. SGF29 specifically recognizes and binds methylated 'Lys-4' of histone H3 (H3K4me), with a preference for trimethylated form (H3K4me3). In the SAGA-type complexes, SGF29 is required to recruit complexes to H3K4me. Also binds non-histone proteins that are methylated on Lys residues. This chain is SAGA-associated factor 29, found in Gallus gallus (Chicken).